A 391-amino-acid polypeptide reads, in one-letter code: Succinate--CoA ligase [ADP-forming] subunit beta (391 aa).

The ATP-grasp domain occupies 9 to 237 (RDLFEKHGVP…RATTDPLELR (229 aa)). Residues K46, 53-55 (GRG), A95, and E100 contribute to the ATP site. Residues N192 and D206 each coordinate Mg(2+). Residues N257 and 320-322 (GIT) contribute to the substrate site.

It belongs to the succinate/malate CoA ligase beta subunit family. In terms of assembly, heterotetramer of two alpha and two beta subunits. Mg(2+) serves as cofactor.

The enzyme catalyses succinate + ATP + CoA = succinyl-CoA + ADP + phosphate. It catalyses the reaction GTP + succinate + CoA = succinyl-CoA + GDP + phosphate. It functions in the pathway carbohydrate metabolism; tricarboxylic acid cycle; succinate from succinyl-CoA (ligase route): step 1/1. In terms of biological role, succinyl-CoA synthetase functions in the citric acid cycle (TCA), coupling the hydrolysis of succinyl-CoA to the synthesis of either ATP or GTP and thus represents the only step of substrate-level phosphorylation in the TCA. The beta subunit provides nucleotide specificity of the enzyme and binds the substrate succinate, while the binding sites for coenzyme A and phosphate are found in the alpha subunit. The sequence is that of Succinate--CoA ligase [ADP-forming] subunit beta from Cutibacterium acnes (strain DSM 16379 / KPA171202) (Propionibacterium acnes).